Here is a 751-residue protein sequence, read N- to C-terminus: Photosystem I P700 chlorophyll a apoprotein A1 (751 aa).

8 helical membrane-spanning segments follow: residues 72–95 (IFSA…FHGA), 158–181 (LYCT…FHYH), 197–221 (MNHH…HVSL), 293–311 (TAHH…GHMY), 348–371 (WHAQ…HHMY), 387–413 (LSLF…IFMV), 435–457 (AIIS…LYVH), and 532–550 (FLVH…LILL). Residues Cys-574 and Cys-583 each coordinate [4Fe-4S] cluster. The next 2 helical transmembrane spans lie at 590–611 (HVFL…HFSW) and 665–687 (LSAY…MFLF). His-676 provides a ligand contact to chlorophyll a'. Residues Met-684 and Tyr-692 each contribute to the chlorophyll a site. Trp-693 lines the phylloquinone pocket. Residues 725-745 (AVGVTHYLLGGIVTTWAFFLA) form a helical membrane-spanning segment.

Belongs to the PsaA/PsaB family. The PsaA/B heterodimer binds the P700 chlorophyll special pair and subsequent electron acceptors. PSI consists of a core antenna complex that captures photons, and an electron transfer chain that converts photonic excitation into a charge separation. The cyanobacterial PSI reaction center is composed of one copy each of PsaA,B,C,D,E,F,I,J,K,L,M and X, and forms trimeric complexes. PSI electron transfer chain: 5 chlorophyll a, 1 chlorophyll a', 2 phylloquinones and 3 4Fe-4S clusters. PSI core antenna: 90 chlorophyll a, 22 carotenoids, 3 phospholipids and 1 galactolipid. P700 is a chlorophyll a/chlorophyll a' dimer, A0 is one or more chlorophyll a, A1 is one or both phylloquinones and FX is a shared 4Fe-4S iron-sulfur center. is required as a cofactor.

It localises to the cellular thylakoid membrane. It catalyses the reaction reduced [plastocyanin] + hnu + oxidized [2Fe-2S]-[ferredoxin] = oxidized [plastocyanin] + reduced [2Fe-2S]-[ferredoxin]. Its function is as follows. PsaA and PsaB bind P700, the primary electron donor of photosystem I (PSI), as well as the electron acceptors A0, A1 and FX. PSI is a plastocyanin/cytochrome c6-ferredoxin oxidoreductase, converting photonic excitation into a charge separation, which transfers an electron from the donor P700 chlorophyll pair to the spectroscopically characterized acceptors A0, A1, FX, FA and FB in turn. Oxidized P700 is reduced on the lumenal side of the thylakoid membrane by plastocyanin or cytochrome c6. This is Photosystem I P700 chlorophyll a apoprotein A1 from Gloeothece citriformis (strain PCC 7424) (Cyanothece sp. (strain PCC 7424)).